We begin with the raw amino-acid sequence, 575 residues long: Transcription factor COE2 (575 aa).

Positions 62–65 (RKSN) are interaction with DNA. The C5-type zinc-finger motif lies at 150 to 169 (CRVLLTHEVMCSRCCEKKSC). Interaction with DNA regions lie at residues 196–203 (NCLKTAGN) and 235–238 (NNSK). The IPT/TIG domain occupies 253 to 336 (PCIKAISPSE…KGAPGRFIYT (84 aa)). The span at 441 to 453 (STQGNNQGYIRNT) shows a compositional bias: polar residues. Residues 441–479 (STQGNNQGYIRNTSSISPRGYSSSSTPQQSNYSTSSNSM) form a disordered region. Residues 454 to 479 (SSISPRGYSSSSTPQQSNYSTSSNSM) are compositionally biased toward low complexity.

Belongs to the COE family. As to quaternary structure, forms either a homodimer or a heterodimer with a related family member. Interacts with SIX1.

The protein localises to the nucleus. In terms of biological role, transcription factor that, in osteoblasts, activates the decoy receptor for RANKL, TNFRSF11B, which in turn regulates osteoclast differentiation. Acts in synergy with the Wnt-responsive LEF1/CTNNB1 pathway. Recognizes variations of the palindromic sequence 5'-ATTCCCNNGGGAATT-3'. This chain is Transcription factor COE2 (EBF2), found in Homo sapiens (Human).